A 183-amino-acid polypeptide reads, in one-letter code: Translation initiation factor IF-3 (183 aa).

The protein belongs to the IF-3 family. In terms of assembly, monomer.

Its subcellular location is the cytoplasm. IF-3 binds to the 30S ribosomal subunit and shifts the equilibrium between 70S ribosomes and their 50S and 30S subunits in favor of the free subunits, thus enhancing the availability of 30S subunits on which protein synthesis initiation begins. The sequence is that of Translation initiation factor IF-3 from Vibrio cholerae serotype O1 (strain ATCC 39315 / El Tor Inaba N16961).